A 319-amino-acid polypeptide reads, in one-letter code: FAD-dependent oxidoreductase FVFD30 (319 aa).

Positions 6, 18, and 25 each coordinate FAD. NAD(+) contacts are provided by lysine 129 and glycine 188. NADP(+) is bound by residues lysine 129 and glycine 188. The FAD site is built by aspartate 228 and tyrosine 265. Residue aspartate 228 participates in 6-hydroxy-FAD binding. Tyrosine 265 is a binding site for NAD(+). Position 265 (tyrosine 265) interacts with NADP(+). A helical membrane pass occupies residues 281–301 (GVGYFGVWWGIVIGGWLASLL).

Belongs to the FAD-dependent oxidoreductase family.

It localises to the membrane. Functionally, probable FAD-dependent oxidoreductase that plays a role in the regulation of fruiting body development. The protein is FAD-dependent oxidoreductase FVFD30 of Flammulina velutipes (Agaricus velutipes).